The primary structure comprises 518 residues: 3-octaprenyl-4-hydroxybenzoate carboxy-lyase (518 aa).

Residue Asn177 coordinates Mn(2+). Residues 180–182, 194–196, and 199–200 each bind prenylated FMN; these read IYR, RWL, and RG. Glu243 is a binding site for Mn(2+). Asp318 functions as the Proton donor in the catalytic mechanism.

It belongs to the UbiD family. As to quaternary structure, homohexamer. The cofactor is prenylated FMN. Mn(2+) is required as a cofactor.

Its subcellular location is the cell membrane. The enzyme catalyses a 4-hydroxy-3-(all-trans-polyprenyl)benzoate + H(+) = a 2-(all-trans-polyprenyl)phenol + CO2. It functions in the pathway cofactor biosynthesis; ubiquinone biosynthesis. Catalyzes the decarboxylation of 3-octaprenyl-4-hydroxy benzoate to 2-octaprenylphenol, an intermediate step in ubiquinone biosynthesis. In Burkholderia orbicola (strain AU 1054), this protein is 3-octaprenyl-4-hydroxybenzoate carboxy-lyase.